We begin with the raw amino-acid sequence, 354 residues long: Guanine nucleotide-binding protein G(i) subunit alpha-3 (354 aa).

G2 carries the N-myristoyl glycine lipid modification. C3 is lipidated: S-palmitoyl cysteine. Residues 32 to 354 (KEVKLLLLGA…KNNLKECGLY (323 aa)) form the G-alpha domain. The segment at 35 to 48 (KLLLLGAGESGKST) is G1 motif. The GTP site is built by G42, E43, S44, G45, K46, S47, T48, D150, S151, L175, R176, T177, R178, V179, K180, T181, V201, G203, N269, K270, D272, L273, C325, A326, and T327. S47 lines the Mg(2+) pocket. Residues 173-181 (DVLRTRVKT) are G2 motif. T181 contributes to the Mg(2+) binding site. The segment at 196–205 (FKMFDVGGQR) is G3 motif. The interval 265-272 (ILFLNKKD) is G4 motif. Residues 324 to 329 (TCATDT) form a G5 motif region.

The protein belongs to the G-alpha family. G(i/o/t/z) subfamily. As to quaternary structure, heterotrimeric G proteins are composed of 3 units; alpha, beta and gamma. The alpha subunit contains the guanine nucleotide binding site. GTP binding causes dissociation of the heterotrimer, liberating the individual subunits so that they can interact with downstream effector proteins. Forms a complex with CCDC88A/GIV and EGFR which leads to enhanced EGFR signaling and triggering of cell migration; ligand stimulation is required for recruitment of GNAI3 to the complex. Interacts (inactive GDP-bound form) with CCDC88A/GIV (via GBA motif); the interaction leads to activation of GNAI3. Interacts (inactive GDP-bound form) with CCDC88C/DAPLE (via GBA motif); the interaction leads to activation of GNAI3. Interacts (inactive GDP-bound form) with NUCB1 (via GBA motif) and NUCB2 (via GBA motif); the interaction leads to activation of GNAI3. Interacts (inactive GDP-bound form) with PLCD4 (via GBA motif); the interaction leads to activation of GNAI3. Interacts with INSR; the interaction is probably mediated by CCDC88A/GIV. Interacts with GPSM1. Interacts (GDP-bound form) with GPSM2 (via GoLoco domains). Does not interact with RGS2. Interacts with RGS8 and RGS10; this strongly enhances the intrinsic GTPase activity. Interacts with RGS16; this strongly enhances the intrinsic GTPase activity. Interacts with RGS12. Interacts (via active GTP- or inactive GDP-bound form) with RGS14. Interacts (via active GTP-bound form) with TRPC5 (via ANK repeats) in a homotetrameric ion channel; the interaction is direct and activates the channel activity.

The protein resides in the cytoplasm. The protein localises to the cell membrane. It is found in the cytoskeleton. It localises to the microtubule organizing center. Its subcellular location is the centrosome. Its function is as follows. Heterotrimeric guanine nucleotide-binding proteins (G proteins) function as transducers downstream of G protein-coupled receptors (GPCRs) in numerous signaling cascades. The alpha chain contains the guanine nucleotide binding site and alternates between an active, GTP-bound state and an inactive, GDP-bound state. Signaling by an activated GPCR promotes GDP release and GTP binding. The alpha subunit has a low GTPase activity that converts bound GTP to GDP, thereby terminating the signal. Both GDP release and GTP hydrolysis are modulated by numerous regulatory proteins. Signaling is mediated via effector proteins, such as adenylate cyclase. Inhibits adenylate cyclase activity, leading to decreased intracellular cAMP levels. Stimulates the activity of receptor-regulated K(+) channels. The active GTP-bound form prevents the association of RGS14 with centrosomes and is required for the translocation of RGS14 from the cytoplasm to the plasma membrane. May play a role in cell division. The active GTP-bound form activates the calcium permeant TRPC5 ion channels. In Mus musculus (Mouse), this protein is Guanine nucleotide-binding protein G(i) subunit alpha-3 (Gnai3).